Reading from the N-terminus, the 132-residue chain is Small ribosomal subunit protein uS8 (132 aa).

Belongs to the universal ribosomal protein uS8 family. In terms of assembly, part of the 30S ribosomal subunit. Contacts proteins S5 and S12.

In terms of biological role, one of the primary rRNA binding proteins, it binds directly to 16S rRNA central domain where it helps coordinate assembly of the platform of the 30S subunit. The polypeptide is Small ribosomal subunit protein uS8 (Lactobacillus delbrueckii subsp. bulgaricus (strain ATCC BAA-365 / Lb-18)).